The primary structure comprises 155 residues: Transcription antitermination protein NusB (155 aa).

The protein belongs to the NusB family.

Its function is as follows. Involved in transcription antitermination. Required for transcription of ribosomal RNA (rRNA) genes. Binds specifically to the boxA antiterminator sequence of the ribosomal RNA (rrn) operons. The chain is Transcription antitermination protein NusB from Halorhodospira halophila (strain DSM 244 / SL1) (Ectothiorhodospira halophila (strain DSM 244 / SL1)).